The chain runs to 240 residues: Putative F-box/kelch-repeat protein At2g29860 (240 aa).

The disordered stretch occupies residues 1-20; it reads MVLLSEIPGGSNGDDPNMNP. One can recognise an F-box domain in the interval 17-63; sequence NMNPQELPEELIESIVAPIPRCYYPSLSLLSRAFRHVITSQQLFVTR. Kelch repeat units lie at residues 120–165 and 167–212; these read KIYV…VIDG and IYVI…VTYA.

This Arabidopsis thaliana (Mouse-ear cress) protein is Putative F-box/kelch-repeat protein At2g29860.